A 512-amino-acid polypeptide reads, in one-letter code: Ribonuclease Y (512 aa).

Residues 3 to 23 (FQIILVVIISALVGLVIGFFI) traverse the membrane as a helical segment. The 64-residue stretch at 202–265 (TVAVIPLPND…EVARLALERL (64 aa)) folds into the KH domain. In terms of domain architecture, HD spans 328 to 421 (VLKHSIEVCH…VQAADAISAA (94 aa)).

It belongs to the RNase Y family.

Its subcellular location is the cell membrane. Its function is as follows. Endoribonuclease that initiates mRNA decay. The chain is Ribonuclease Y from Desulforamulus reducens (strain ATCC BAA-1160 / DSM 100696 / MI-1) (Desulfotomaculum reducens).